The following is a 246-amino-acid chain: TLC domain-containing protein 2 (246 aa).

6 helical membrane passes run 5-25 (SVILTTGSSVGFFKLVNYGLG), 43-63 (ISTSFVHSLITGVWSVLCFCM), 79-99 (SHALVSVSIGYFIYDFLDMVI), 107-127 (WELLFHHVVVITCFGISVLTC), 128-148 (RYVGFAVVALLVEINSVFLHL), and 199-219 (FSYTIGSVGLAIMTAMNIVLF). The TLC domain occupies 35-231 (RNAWKWNNIS…LMRSDFMKAS (197 aa)).

Belongs to the TLCD family.

It is found in the cell membrane. In terms of biological role, regulates the composition and fluidity of the plasma membrane. Inhibits the incorporation of membrane-fluidizing phospholipids containing omega-3 long-chain polyunsaturated fatty acids (LCPUFA) and thereby promotes membrane rigidity. Does not appear to have any effect on LCPUFA synthesis. This chain is TLC domain-containing protein 2 (tlcd2), found in Danio rerio (Zebrafish).